We begin with the raw amino-acid sequence, 359 residues long: Protein mab-21-like 2 (359 aa).

The protein belongs to the mab-21 family. Expressed in the adult cerebellum and eye, with lower levels in the adult forebrain. In embryos at 10.5 days post-coitum strongly expressed in the rostral and distal regions of the developing neural retina, with no expression immediately adjacent to the closing optic fissure. Expression is also observed in the dorsal and ventral aspects of the developing forelimb bud and in the developing pharyngeal arches, as well as in the midbrain.

The protein resides in the nucleus. It is found in the cytoplasm. Required for several aspects of embryonic development including normal development of the eye, notochord, neural tube and other organ tissues, and for embryonic turning. This chain is Protein mab-21-like 2 (Mab21l2), found in Mus musculus (Mouse).